Here is a 234-residue protein sequence, read N- to C-terminus: Fibrillarin-like rRNA/tRNA 2'-O-methyltransferase (234 aa).

S-adenosyl-L-methionine contacts are provided by residues 91-92 (TT), 110-111 (EF), 137-138 (DA), and 157-160 (DVAQ).

Belongs to the methyltransferase superfamily. Fibrillarin family. Interacts with nop5. Component of box C/D small ribonucleoprotein (sRNP) particles that contain rpl7ae, FlpA and nop5, plus a guide RNA.

Involved in pre-rRNA and tRNA processing. Utilizes the methyl donor S-adenosyl-L-methionine to catalyze the site-specific 2'-hydroxyl methylation of ribose moieties in rRNA and tRNA. Site specificity is provided by a guide RNA that base pairs with the substrate. Methylation occurs at a characteristic distance from the sequence involved in base pairing with the guide RNA. The sequence is that of Fibrillarin-like rRNA/tRNA 2'-O-methyltransferase from Pyrobaculum calidifontis (strain DSM 21063 / JCM 11548 / VA1).